A 242-amino-acid chain; its full sequence is Biosynthetic peptidoglycan transglycosylase (242 aa).

A helical transmembrane segment spans residues 19-39 (ILAALAVFWGGGIALFSVVPV).

It belongs to the glycosyltransferase 51 family.

The protein resides in the cell inner membrane. It carries out the reaction [GlcNAc-(1-&gt;4)-Mur2Ac(oyl-L-Ala-gamma-D-Glu-L-Lys-D-Ala-D-Ala)](n)-di-trans,octa-cis-undecaprenyl diphosphate + beta-D-GlcNAc-(1-&gt;4)-Mur2Ac(oyl-L-Ala-gamma-D-Glu-L-Lys-D-Ala-D-Ala)-di-trans,octa-cis-undecaprenyl diphosphate = [GlcNAc-(1-&gt;4)-Mur2Ac(oyl-L-Ala-gamma-D-Glu-L-Lys-D-Ala-D-Ala)](n+1)-di-trans,octa-cis-undecaprenyl diphosphate + di-trans,octa-cis-undecaprenyl diphosphate + H(+). It functions in the pathway cell wall biogenesis; peptidoglycan biosynthesis. Functionally, peptidoglycan polymerase that catalyzes glycan chain elongation from lipid-linked precursors. The polypeptide is Biosynthetic peptidoglycan transglycosylase (Salmonella choleraesuis (strain SC-B67)).